The chain runs to 217 residues: Cytidylate kinase (217 aa).

Position 9–17 (9–17 (GPAGAGKST)) interacts with ATP.

The protein belongs to the cytidylate kinase family. Type 1 subfamily.

The protein resides in the cytoplasm. It carries out the reaction CMP + ATP = CDP + ADP. The catalysed reaction is dCMP + ATP = dCDP + ADP. This chain is Cytidylate kinase, found in Clostridium acetobutylicum (strain ATCC 824 / DSM 792 / JCM 1419 / IAM 19013 / LMG 5710 / NBRC 13948 / NRRL B-527 / VKM B-1787 / 2291 / W).